The sequence spans 911 residues: ATP-dependent DNA helicase Q-like 5 (911 aa).

The interval M1 to L84 is disordered. Positions S20 to R48 are enriched in low complexity. Positions P54–P79 are enriched in pro residues. Residues I278–N448 form the Helicase ATP-binding domain. L291–S298 lines the ATP pocket. The DEAH box signature appears at D390–H393. Positions R470–E628 constitute a Helicase C-terminal domain.

Belongs to the helicase family. RecQ subfamily. Mostly expressed in roots, seedlings, shoots, shoot apical mersitem, flowers, and siliques.

The protein localises to the nucleus. The catalysed reaction is Couples ATP hydrolysis with the unwinding of duplex DNA by translocating in the 3'-5' direction.. The enzyme catalyses ATP + H2O = ADP + phosphate + H(+). Its function is as follows. 3'-5' DNA helicase that may play a role in the repair of DNA. The protein is ATP-dependent DNA helicase Q-like 5 (RECQL5) of Arabidopsis thaliana (Mouse-ear cress).